Here is a 604-residue protein sequence, read N- to C-terminus: Protein hemingway (604 aa).

4 disordered regions span residues 1 to 70 (MSGA…GNPH), 103 to 309 (NQLS…PTSQ), 359 to 387 (SDRR…GGGI), and 544 to 585 (TIKA…IDLD). Composition is skewed to acidic residues over residues 8–38 (SDEE…YIEP), 135–183 (EDEA…DDAQ), 194–214 (DDSD…EDEP), and 288–300 (EEPE…EENQ). A compositionally biased stretch (low complexity) spans 368–379 (EMSSMTETTMTS).

This sequence belongs to the CFAP97 family. Detected in ciliated sensory neurons at all stages of development, and in adult testis.

It localises to the cell projection. It is found in the cilium. The protein resides in the perikaryon. Its subcellular location is the cytoplasm. In terms of biological role, involved in assembly and/or maintenance of motile cilia. Required during spermatogenesis for axoneme elongation. Necessary for optimal function of the chordotonal (hearing) organs. The polypeptide is Protein hemingway (Drosophila melanogaster (Fruit fly)).